The primary structure comprises 279 residues: HTH-type transcriptional regulator HdfR (279 aa).

In terms of domain architecture, HTH lysR-type spans 1-58; that stretch reads MDTELLKTFLEVSRTRHFGRAAESLYLTQSAVSFRIRQLENQLGVNLFTRHRNNIRLT. Positions 18–37 form a DNA-binding region, H-T-H motif; sequence FGRAAESLYLTQSAVSFRIR.

It belongs to the LysR transcriptional regulatory family.

Its function is as follows. Negatively regulates the transcription of the flagellar master operon flhDC by binding to the upstream region of the operon. The sequence is that of HTH-type transcriptional regulator HdfR from Escherichia coli (strain ATCC 8739 / DSM 1576 / NBRC 3972 / NCIMB 8545 / WDCM 00012 / Crooks).